Consider the following 664-residue polypeptide: Acetylcholinesterase (664 aa).

The signal sequence occupies residues 1 to 29; sequence MFVNQRTRRPYMSVFVLVLGAAVICPAYG. An intrachain disulfide couples C95 to C122. N-linked (GlcNAc...) asparagine glycosylation occurs at N117. S261 acts as the Acyl-ester intermediate in catalysis. A disulfide bond links C315 and C330. N-linked (GlcNAc...) asparagine glycosylation is present at N316. Catalysis depends on charge relay system residues E390 and H504. C466 and C588 are disulfide-bonded. N517 carries N-linked (GlcNAc...) asparagine glycosylation. A lipid anchor (GPI-anchor amidated asparagine) is attached at N647. Positions 648 to 664 are cleaved as a propeptide — removed in mature form; sequence KTPPHPQVILETRAFMH.

It belongs to the type-B carboxylesterase/lipase family. Homodimer; disulfide-linked.

It localises to the synapse. It is found in the cell membrane. The enzyme catalyses acetylcholine + H2O = choline + acetate + H(+). Its function is as follows. Rapidly hydrolyzes choline released into the synapse. It can hydrolyze butyrylthiocholine. In Anopheles stephensi (Indo-Pakistan malaria mosquito), this protein is Acetylcholinesterase.